The following is a 437-amino-acid chain: Cobyrinate a,c-diamide synthase (437 aa).

Residues 241-430 (KIAVAKDEAF…AHVHFFGNLD (190 aa)) enclose the GATase cobBQ-type domain. Cys-323 (nucleophile) is an active-site residue.

This sequence belongs to the CobB/CbiA family. Mg(2+) is required as a cofactor.

The enzyme catalyses cob(II)yrinate + 2 L-glutamine + 2 ATP + 2 H2O = cob(II)yrinate a,c diamide + 2 L-glutamate + 2 ADP + 2 phosphate + 2 H(+). It participates in cofactor biosynthesis; adenosylcobalamin biosynthesis; cob(II)yrinate a,c-diamide from sirohydrochlorin (anaerobic route): step 10/10. In terms of biological role, catalyzes the ATP-dependent amidation of the two carboxylate groups at positions a and c of cobyrinate, using either L-glutamine or ammonia as the nitrogen source. In Clostridium acetobutylicum (strain ATCC 824 / DSM 792 / JCM 1419 / IAM 19013 / LMG 5710 / NBRC 13948 / NRRL B-527 / VKM B-1787 / 2291 / W), this protein is Cobyrinate a,c-diamide synthase.